The following is a 211-amino-acid chain: High frequency lysogenization protein HflD homolog (211 aa).

The protein belongs to the HflD family.

Its subcellular location is the cytoplasm. It is found in the cell membrane. This chain is High frequency lysogenization protein HflD homolog, found in Buchnera aphidicola subsp. Acyrthosiphon pisum (strain 5A).